The following is a 278-amino-acid chain: Large ribosomal subunit protein uL2 (278 aa).

The disordered stretch occupies residues 202–278 (ANINDGKAGR…IMRSRHQRKK (77 aa)).

Belongs to the universal ribosomal protein uL2 family. Part of the 50S ribosomal subunit. Forms a bridge to the 30S subunit in the 70S ribosome.

In terms of biological role, one of the primary rRNA binding proteins. Required for association of the 30S and 50S subunits to form the 70S ribosome, for tRNA binding and peptide bond formation. It has been suggested to have peptidyltransferase activity; this is somewhat controversial. Makes several contacts with the 16S rRNA in the 70S ribosome. The polypeptide is Large ribosomal subunit protein uL2 (Rhizobium johnstonii (strain DSM 114642 / LMG 32736 / 3841) (Rhizobium leguminosarum bv. viciae)).